A 317-amino-acid polypeptide reads, in one-letter code: Olfactory receptor 1082 (317 aa).

At 1–26 the chain is on the extracellular side; it reads MESGNSTRRFSSFFLLGFTENPQLHF. A glycan (N-linked (GlcNAc...) asparagine) is linked at asparagine 5. A helical membrane pass occupies residues 27 to 51; the sequence is LIFALFLSMYLVTVLGNLLIIMAII. Residues 52–58 lie on the Cytoplasmic side of the membrane; sequence TQSHLHT. A helical transmembrane segment spans residues 59 to 80; the sequence is PMYFFLANLSFVDICFTSTTIP. The Extracellular segment spans residues 81 to 101; sequence KMLVNIYTQSKSITYEDCISQ. Cysteine 98 and cysteine 190 are disulfide-bonded. The helical transmembrane segment at 102–121 threads the bilayer; the sequence is MCVFLVFAELGNFLLAVMAY. Topologically, residues 122-140 are cytoplasmic; sequence DRYVAXCHPLCYTVIVNHR. Residues 141–159 traverse the membrane as a helical segment; that stretch reads LCILLLLLSWVISIFHAFI. Residues 160–197 lie on the Extracellular side of the membrane; sequence QSLIVLQLTFCGDVKIPHFFCELNQLSQLTCSDNFPSH. The chain crosses the membrane as a helical span at residues 198–220; that stretch reads LIMNLVPVMLAAISFSGILYSYF. At 221–237 the chain is on the cytoplasmic side; sequence KIVSSIHSISTVQGKYK. The chain crosses the membrane as a helical span at residues 238–261; it reads AFSTCASHLSIVSLFYSTGLGVYV. At 262-273 the chain is on the extracellular side; it reads SSAVVQSSHSAA. The chain crosses the membrane as a helical span at residues 274 to 293; the sequence is SASVMYTVVTPMLNPFIYSL. At 294 to 317 the chain is on the cytoplasmic side; it reads RNKDVKRALERLLEGNCKVHHWTG.

The protein belongs to the G-protein coupled receptor 1 family. As to expression, olfactory epithelium.

The protein resides in the cell membrane. Odorant receptor. This chain is Olfactory receptor 1082 (Olr1082), found in Rattus norvegicus (Rat).